A 399-amino-acid polypeptide reads, in one-letter code: S-adenosylmethionine synthase (399 aa).

An ATP-binding site is contributed by His16. Asp18 contributes to the Mg(2+) binding site. Residue Glu44 participates in K(+) binding. Residues Glu57 and Gln100 each coordinate L-methionine. The segment at 100-110 (QSSDIAQGVNE) is flexible loop. Residues 177–179 (DAK), 244–245 (RF), Asp253, 259–260 (RK), Ala276, and Lys280 contribute to the ATP site. Residue Asp253 participates in L-methionine binding. An L-methionine-binding site is contributed by Lys284.

The protein belongs to the AdoMet synthase family. As to quaternary structure, homotetramer; dimer of dimers. It depends on Mg(2+) as a cofactor. K(+) is required as a cofactor.

It is found in the cytoplasm. The enzyme catalyses L-methionine + ATP + H2O = S-adenosyl-L-methionine + phosphate + diphosphate. The protein operates within amino-acid biosynthesis; S-adenosyl-L-methionine biosynthesis; S-adenosyl-L-methionine from L-methionine: step 1/1. Its function is as follows. Catalyzes the formation of S-adenosylmethionine (AdoMet) from methionine and ATP. The overall synthetic reaction is composed of two sequential steps, AdoMet formation and the subsequent tripolyphosphate hydrolysis which occurs prior to release of AdoMet from the enzyme. This chain is S-adenosylmethionine synthase, found in Lactococcus lactis subsp. cremoris (strain MG1363).